We begin with the raw amino-acid sequence, 428 residues long: Glutamate-1-semialdehyde 2,1-aminomutase (428 aa).

An N6-(pyridoxal phosphate)lysine modification is found at Lys-267.

The protein belongs to the class-III pyridoxal-phosphate-dependent aminotransferase family. HemL subfamily. As to quaternary structure, homodimer. Pyridoxal 5'-phosphate serves as cofactor.

The protein localises to the cytoplasm. The enzyme catalyses (S)-4-amino-5-oxopentanoate = 5-aminolevulinate. It participates in porphyrin-containing compound metabolism; protoporphyrin-IX biosynthesis; 5-aminolevulinate from L-glutamyl-tRNA(Glu): step 2/2. The polypeptide is Glutamate-1-semialdehyde 2,1-aminomutase (Pelobacter propionicus (strain DSM 2379 / NBRC 103807 / OttBd1)).